Here is a 974-residue protein sequence, read N- to C-terminus: Villin-4 (974 aa).

Gelsolin-like repeat units lie at residues 29-79 (FIPT…DEAG), 150-190 (VHVK…QERA), 262-305 (GQAN…DDRK), 394-451 (LQVW…EERG), 532-572 (MQAI…TDQE), and 634-675 (LKVT…KNKL). The tract at residues 738–783 (VKNGGTPVADKPKRRTPASYGGRASVPDKSQQRSRSMSFSPDRVRV) is disordered. Phosphoserine occurs at positions 777 and 787. 2 disordered regions span residues 801 to 833 (NARN…APKS) and 845 to 930 (KIPP…PVSD). Residues 824–833 (SSKFAPAPKS) show a composition bias toward low complexity. The segment covering 872-887 (NSKEQEEKKENDKEEG) has biased composition (basic and acidic residues). Polar residues predominate over residues 888 to 898 (SMSSRIESLTI). The residue at position 890 (Ser-890) is a Phosphoserine. An HP domain is found at 909–974 (EEDLPAHPYD…NKFKMAVQLF (66 aa)). Residues 912–921 (LPAHPYDRLK) show a composition bias toward basic and acidic residues.

It belongs to the villin/gelsolin family. Preferentially expressed in vegetative tissues. Detected in the whole seedling, hypocotyl, cotyledon, primary root, roots hair cells and trichomes. Expressed in flowers but not in the silique.

It is found in the cytoplasm. The protein localises to the cytoskeleton. Its function is as follows. Binds actin and actin filament bundles in a Ca(2+)-insensitive manner, but caps the barbed end of actin filaments and is able to sever them in a calcium-dependent manner. Involved in root hair growth through regulating actin organization in a Ca(2+)-dependent manner. In Arabidopsis thaliana (Mouse-ear cress), this protein is Villin-4.